Reading from the N-terminus, the 145-residue chain is Large ribosomal subunit protein uL15 (145 aa).

The disordered stretch occupies residues 1 to 55 (MSLLKTLAPKAGSKHAPKRIGRGIGSGMGGTATKGHKGQLARTGGTVRRGFEGGQ). Basic residues predominate over residues 12–21 (GSKHAPKRIG). Residues 22–32 (RGIGSGMGGTA) show a composition bias toward gly residues.

It belongs to the universal ribosomal protein uL15 family. As to quaternary structure, part of the 50S ribosomal subunit.

Its function is as follows. Binds to the 23S rRNA. This is Large ribosomal subunit protein uL15 from Bdellovibrio bacteriovorus (strain ATCC 15356 / DSM 50701 / NCIMB 9529 / HD100).